The primary structure comprises 354 residues: Ribosomal RNA large subunit methyltransferase M (354 aa).

S-adenosyl-L-methionine is bound by residues Ser183, 216–219 (SPGG), Asp235, Asp255, and Asp271. Lys300 functions as the Proton acceptor in the catalytic mechanism.

Belongs to the class I-like SAM-binding methyltransferase superfamily. RNA methyltransferase RlmE family. RlmM subfamily. In terms of assembly, monomer.

Its subcellular location is the cytoplasm. It catalyses the reaction cytidine(2498) in 23S rRNA + S-adenosyl-L-methionine = 2'-O-methylcytidine(2498) in 23S rRNA + S-adenosyl-L-homocysteine + H(+). Catalyzes the 2'-O-methylation at nucleotide C2498 in 23S rRNA. This chain is Ribosomal RNA large subunit methyltransferase M, found in Pseudomonas putida (strain ATCC 700007 / DSM 6899 / JCM 31910 / BCRC 17059 / LMG 24140 / F1).